Here is a 288-residue protein sequence, read N- to C-terminus: Fructose-bisphosphate aldolase (288 aa).

S49 contacts D-glyceraldehyde 3-phosphate. The active-site Proton donor is D84. Residues H85, D105, E135, and H177 each contribute to the Zn(2+) site. G178 is a binding site for dihydroxyacetone phosphate. H206 provides a ligand contact to Zn(2+). Dihydroxyacetone phosphate-binding positions include G207 to S209 and N228 to T231.

The protein belongs to the class II fructose-bisphosphate aldolase family. Homodimer. Zn(2+) serves as cofactor.

It catalyses the reaction beta-D-fructose 1,6-bisphosphate = D-glyceraldehyde 3-phosphate + dihydroxyacetone phosphate. It participates in carbohydrate degradation; glycolysis; D-glyceraldehyde 3-phosphate and glycerone phosphate from D-glucose: step 4/4. Its function is as follows. Catalyzes the aldol condensation of dihydroxyacetone phosphate (DHAP or glycerone-phosphate) with glyceraldehyde 3-phosphate (G3P) to form fructose 1,6-bisphosphate (FBP) in gluconeogenesis and the reverse reaction in glycolysis. This chain is Fructose-bisphosphate aldolase (fba), found in Mycoplasma genitalium (strain ATCC 33530 / DSM 19775 / NCTC 10195 / G37) (Mycoplasmoides genitalium).